The sequence spans 130 residues: Small ribosomal subunit protein uS11 (130 aa).

Belongs to the universal ribosomal protein uS11 family. As to quaternary structure, part of the 30S ribosomal subunit. Interacts with proteins S7 and S18. Binds to IF-3.

Functionally, located on the platform of the 30S subunit, it bridges several disparate RNA helices of the 16S rRNA. Forms part of the Shine-Dalgarno cleft in the 70S ribosome. This Aliarcobacter butzleri (strain RM4018) (Arcobacter butzleri) protein is Small ribosomal subunit protein uS11.